An 81-amino-acid polypeptide reads, in one-letter code: Photosystem I iron-sulfur center (81 aa).

4Fe-4S ferredoxin-type domains are found at residues Ala2–Trp31 and Ile39–Tyr68. Residues Cys11, Cys14, Cys17, Cys21, Cys48, Cys51, Cys54, and Cys58 each coordinate [4Fe-4S] cluster.

As to quaternary structure, the eukaryotic PSI reaction center is composed of at least 11 subunits. [4Fe-4S] cluster serves as cofactor.

The protein localises to the plastid. The protein resides in the chloroplast thylakoid membrane. It catalyses the reaction reduced [plastocyanin] + hnu + oxidized [2Fe-2S]-[ferredoxin] = oxidized [plastocyanin] + reduced [2Fe-2S]-[ferredoxin]. Its function is as follows. Apoprotein for the two 4Fe-4S centers FA and FB of photosystem I (PSI); essential for photochemical activity. FB is the terminal electron acceptor of PSI, donating electrons to ferredoxin. The C-terminus interacts with PsaA/B/D and helps assemble the protein into the PSI complex. Required for binding of PsaD and PsaE to PSI. PSI is a plastocyanin-ferredoxin oxidoreductase, converting photonic excitation into a charge separation, which transfers an electron from the donor P700 chlorophyll pair to the spectroscopically characterized acceptors A0, A1, FX, FA and FB in turn. The protein is Photosystem I iron-sulfur center of Marchantia polymorpha (Common liverwort).